Reading from the N-terminus, the 383-residue chain is Probable endopolygalacturonase C (383 aa).

An N-terminal signal peptide occupies residues 1–16 (MVRQLILISSLLAAVA). A propeptide spanning residues 17-40 (VRAPADPAHPMVTEAPDVNLVEKR) is cleaved from the precursor. Cys-44 and Cys-62 are joined by a disulfide. PbH1 repeat units follow at residues 175-206 (STDL…DIGE) and 207-228 (STYI…AINS). Asp-221 serves as the catalytic Proton donor. Cys-223 and Cys-239 are joined by a disulfide. The active site involves His-243. PbH1 repeat units lie at residues 253–279 (RDDN…RIKT) and 287–309 (VSEV…VIEQ). The N-linked (GlcNAc...) asparagine glycan is linked to Asn-260. Disulfide bonds link Cys-348/Cys-353 and Cys-372/Cys-381.

The protein belongs to the glycosyl hydrolase 28 family.

The protein localises to the secreted. The enzyme catalyses (1,4-alpha-D-galacturonosyl)n+m + H2O = (1,4-alpha-D-galacturonosyl)n + (1,4-alpha-D-galacturonosyl)m.. In terms of biological role, involved in maceration and soft-rotting of plant tissue. Hydrolyzes the 1,4-alpha glycosidic bonds of de-esterified pectate in the smooth region of the plant cell wall. This is Probable endopolygalacturonase C (pgaC) from Aspergillus niger.